A 200-amino-acid chain; its full sequence is Acyl-homoserine-lactone synthase (200 aa).

It belongs to the autoinducer synthase family.

The enzyme catalyses a fatty acyl-[ACP] + S-adenosyl-L-methionine = an N-acyl-L-homoserine lactone + S-methyl-5'-thioadenosine + holo-[ACP] + H(+). Functionally, required for the synthesis of BHL (N-butanoyl-L-homoserine lactone). This chain is Acyl-homoserine-lactone synthase (swrI), found in Serratia liquefaciens.